The following is a 522-amino-acid chain: 2-isopropylmalate synthase (522 aa).

The Pyruvate carboxyltransferase domain maps to 5–267 (VIIFDTTLRD…ETGINAKEIH (263 aa)). Mn(2+) is bound by residues Asp14, His202, His204, and Asn238. The interval 392 to 522 (QLQQLVVQSD…MHKNRELGGV (131 aa)) is regulatory domain.

Belongs to the alpha-IPM synthase/homocitrate synthase family. LeuA type 1 subfamily. In terms of assembly, homodimer. Requires Mn(2+) as cofactor.

The protein resides in the cytoplasm. It catalyses the reaction 3-methyl-2-oxobutanoate + acetyl-CoA + H2O = (2S)-2-isopropylmalate + CoA + H(+). It functions in the pathway amino-acid biosynthesis; L-leucine biosynthesis; L-leucine from 3-methyl-2-oxobutanoate: step 1/4. Catalyzes the condensation of the acetyl group of acetyl-CoA with 3-methyl-2-oxobutanoate (2-ketoisovalerate) to form 3-carboxy-3-hydroxy-4-methylpentanoate (2-isopropylmalate). The protein is 2-isopropylmalate synthase of Shewanella sp. (strain ANA-3).